The chain runs to 157 residues: Protein Smg (157 aa).

It belongs to the Smg family.

In Serratia proteamaculans (strain 568), this protein is Protein Smg.